Reading from the N-terminus, the 229-residue chain is uncharacterized protein (229 aa).

Positions 1 to 41 are disordered; that stretch reads MRSAKVGVARQLETKKPQTGRKISTSSRGTIHSQQSQPEDI. Residues 21 to 39 show a composition bias toward polar residues; the sequence is RKISTSSRGTIHSQQSQPE. EF-hand domains follow at residues 48–83, 84–119, 123–158, and 159–193; these read KELK…IGLH, ANKA…SQNI, TNEE…FGDF, and DDEL…YLLN. 13 residues coordinate Ca(2+): aspartate 61, aspartate 63, serine 65, glutamate 72, aspartate 97, aspartate 99, asparagine 101, glutamate 103, glutamate 108, aspartate 136, aspartate 138, asparagine 140, and glutamate 147. Positions 194–217 are enriched in basic and acidic residues; it reads DPKHDIDTGDSDVERYDDRHDDRA. The tract at residues 194-229 is disordered; the sequence is DPKHDIDTGDSDVERYDDRHDDRASPMPNHLSTVPE.

This is an uncharacterized protein from Caenorhabditis elegans.